The following is a 550-amino-acid chain: Arginine--tRNA ligase (550 aa).

The short motif at 130–140 is the 'HIGH' region element; it reads ANPTGPIHIGG.

This sequence belongs to the class-I aminoacyl-tRNA synthetase family. In terms of assembly, monomer.

It is found in the cytoplasm. It catalyses the reaction tRNA(Arg) + L-arginine + ATP = L-arginyl-tRNA(Arg) + AMP + diphosphate. This is Arginine--tRNA ligase from Mycobacterium sp. (strain JLS).